The following is an 81-amino-acid chain: Large ribosomal subunit protein bL31B (81 aa).

It belongs to the bacterial ribosomal protein bL31 family. Type B subfamily. In terms of assembly, part of the 50S ribosomal subunit.

This is Large ribosomal subunit protein bL31B from Halalkalibacterium halodurans (strain ATCC BAA-125 / DSM 18197 / FERM 7344 / JCM 9153 / C-125) (Bacillus halodurans).